The chain runs to 244 residues: Mediator of RNA polymerase II transcription subunit 19 (244 aa).

2 disordered regions span residues 1 to 67 (MENF…PFYL) and 171 to 244 (PKKK…SSLR). Pro residues predominate over residues 26-38 (GKPPPPPPPPPGG). Positions 44–55 (PPSTATSAPAGA) are enriched in low complexity. A compositionally biased stretch (basic residues) spans 171 to 182 (PKKKNKHKHKQS). Position 194 is a phosphoserine (Ser-194). Over residues 212–224 (KRKKKEKKKKKNR) the composition is skewed to basic residues. Phosphoserine is present on Ser-226. The segment covering 234-244 (SSQASSSSSLR) has biased composition (low complexity).

Belongs to the Mediator complex subunit 19 family. As to quaternary structure, component of the Mediator complex, which is composed of MED1, MED4, MED6, MED7, MED8, MED9, MED10, MED11, MED12, MED13, MED13L, MED14, MED15, MED16, MED17, MED18, MED19, MED20, MED21, MED22, MED23, MED24, MED25, MED26, MED27, MED29, MED30, MED31, CCNC, CDK8 and CDC2L6/CDK11. The MED12, MED13, CCNC and CDK8 subunits form a distinct module termed the CDK8 module. Mediator containing the CDK8 module is less active than Mediator lacking this module in supporting transcriptional activation. Individual preparations of the Mediator complex lacking one or more distinct subunits have been variously termed ARC, CRSP, DRIP, PC2, SMCC and TRAP.

It is found in the nucleus. Its function is as follows. Component of the Mediator complex, a coactivator involved in the regulated transcription of nearly all RNA polymerase II-dependent genes. Mediator functions as a bridge to convey information from gene-specific regulatory proteins to the basal RNA polymerase II transcription machinery. Mediator is recruited to promoters by direct interactions with regulatory proteins and serves as a scaffold for the assembly of a functional preinitiation complex with RNA polymerase II and the general transcription factors. The sequence is that of Mediator of RNA polymerase II transcription subunit 19 (Med19) from Mus musculus (Mouse).